Reading from the N-terminus, the 1744-residue chain is Tensin-1 (1744 aa).

The segment at Ser-15–Met-55 is disordered. The Phosphatase tensin-type domain occupies Thr-58–Ser-230. In terms of domain architecture, C2 tensin-type spans Asn-235–Gly-361. Disordered stretches follow at residues Thr-467 to Glu-505, Asp-569 to Asp-589, Ala-666 to Leu-686, Pro-724 to Arg-797, Gly-934 to His-956, Arg-982 to Ala-1077, and Val-1156 to Val-1437. Polar residues predominate over residues Leu-468–Thr-481. The segment covering Gly-580 to Asp-589 has biased composition (low complexity). Polar residues predominate over residues Ala-728–Pro-753. Over residues Ser-763–Pro-773 the composition is skewed to low complexity. Positions Gln-774–Pro-783 are enriched in pro residues. Basic and acidic residues-rich tracts occupy residues Thr-1004–Ser-1014 and Arg-1041–Phe-1054. The segment covering Ala-1060 to Gly-1069 has biased composition (polar residues). 2 stretches are compositionally biased toward low complexity: residues Val-1156–Val-1169 and Ser-1208–Ser-1220. Polar residues-rich tracts occupy residues Leu-1344–Pro-1355, Gly-1370–Asp-1380, and Glu-1405–Ala-1420. Over residues Ser-1421–Ser-1435 the composition is skewed to low complexity. The SH2 domain occupies Trp-1472 to Asp-1581. A PTB domain is found at Ala-1607–Lys-1743.

This sequence belongs to the PTEN phosphatase protein family. Binds to actin filaments. Interacts with phosphotyrosine-containing proteins. Tyrosine phosphorylated. As to expression, heart, gizzard, lung and skeletal muscle.

It localises to the cell surface. The protein localises to the cell junction. Its subcellular location is the focal adhesion. The protein resides in the cytoplasm. It is found in the cytoskeleton. Functionally, may act as a protein phosphatase and/or a lipid phosphatase. Involved in fibrillar adhesion formation. Plays a role in cell polarization and migration. May be involved in cartilage development and in linking signal transduction pathways to the cytoskeleton. The polypeptide is Tensin-1 (TNS1) (Gallus gallus (Chicken)).